The following is a 95-amino-acid chain: Acylphosphatase (95 aa).

One can recognise an Acylphosphatase-like domain in the interval 7-95 (RLTAWVLGTV…PKGEVGFRTR (89 aa)). Active-site residues include arginine 22 and asparagine 40.

The protein belongs to the acylphosphatase family.

It catalyses the reaction an acyl phosphate + H2O = a carboxylate + phosphate + H(+). The polypeptide is Acylphosphatase (acyP) (Corynebacterium diphtheriae (strain ATCC 700971 / NCTC 13129 / Biotype gravis)).